The following is a 75-amino-acid chain: uncharacterized protein (75 aa).

The dksA C4-type zinc finger occupies 43–67 (CSECGLPIPTTRLRANPFAHRCVSC).

This is an uncharacterized protein from Haemophilus influenzae (strain ATCC 51907 / DSM 11121 / KW20 / Rd).